The sequence spans 335 residues: ADP-L-glycero-D-manno-heptose-6-epimerase (335 aa).

Residues 11–12 (FI), 32–33 (DD), lysine 39, 75–79 (EGACS), and asparagine 92 each bind NADP(+). Tyrosine 139 functions as the Proton acceptor in the catalytic mechanism. An NADP(+)-binding site is contributed by lysine 143. Asparagine 172 contacts substrate. NADP(+) is bound by residues valine 173 and lysine 181. Lysine 181 (proton acceptor) is an active-site residue. Residues arginine 183, histidine 190, 204–207 (FGDY), arginine 217, and tyrosine 296 each bind substrate.

This sequence belongs to the NAD(P)-dependent epimerase/dehydratase family. HldD subfamily. Homopentamer. Requires NADP(+) as cofactor.

The enzyme catalyses ADP-D-glycero-beta-D-manno-heptose = ADP-L-glycero-beta-D-manno-heptose. The protein operates within nucleotide-sugar biosynthesis; ADP-L-glycero-beta-D-manno-heptose biosynthesis; ADP-L-glycero-beta-D-manno-heptose from D-glycero-beta-D-manno-heptose 7-phosphate: step 4/4. Functionally, catalyzes the interconversion between ADP-D-glycero-beta-D-manno-heptose and ADP-L-glycero-beta-D-manno-heptose via an epimerization at carbon 6 of the heptose. The chain is ADP-L-glycero-D-manno-heptose-6-epimerase from Polaromonas naphthalenivorans (strain CJ2).